Here is a 590-residue protein sequence, read N- to C-terminus: Phosphatidylserine decarboxylase proenzyme 1, mitochondrial (590 aa).

Residues 1-59 constitute a mitochondrion transit peptide; that stretch reads MPLKPISFRWSKTSVRSVPNPFMYGPDNLNKPLSRASQMAERVHQQTPSSTNYQQRRYF. Topologically, residues 60–140 are mitochondrial matrix; it reads SYYYYQFPKI…GKERRRFIRW (81 aa). The chain crosses the membrane as a helical span at residues 141-159; it reads WTVTSLTIVLGGVYAKIKY. At 160–590 the chain is on the mitochondrial intermembrane side; the sequence is ERGDHEENPY…KVGQSLGGFV (431 aa). Residues Asp-260, His-403, and Ser-558 each act as charge relay system; for autoendoproteolytic cleavage activity in the active site. The active-site Schiff-base intermediate with substrate; via pyruvic acid; for decarboxylase activity is Ser-558. Position 558 is a pyruvic acid (Ser); by autocatalysis (Ser-558).

It belongs to the phosphatidylserine decarboxylase family. PSD-B subfamily. Eukaryotic type I sub-subfamily. As to quaternary structure, heterodimer of a large membrane-associated beta subunit and a small pyruvoyl-containing alpha subunit. Requires pyruvate as cofactor. Is synthesized initially as an inactive proenzyme. Formation of the active enzyme involves a self-maturation process in which the active site pyruvoyl group is generated from an internal serine residue via an autocatalytic post-translational modification. Two non-identical subunits are generated from the proenzyme in this reaction, and the pyruvate is formed at the N-terminus of the alpha chain, which is derived from the carboxyl end of the proenzyme. The autoendoproteolytic cleavage occurs by a canonical serine protease mechanism, in which the side chain hydroxyl group of the serine supplies its oxygen atom to form the C-terminus of the beta chain, while the remainder of the serine residue undergoes an oxidative deamination to produce ammonia and the pyruvoyl prosthetic group on the alpha chain. During this reaction, the Ser that is part of the protease active site of the proenzyme becomes the pyruvoyl prosthetic group, which constitutes an essential element of the active site of the mature decarboxylase.

The protein localises to the mitochondrion inner membrane. It catalyses the reaction a 1,2-diacyl-sn-glycero-3-phospho-L-serine + H(+) = a 1,2-diacyl-sn-glycero-3-phosphoethanolamine + CO2. Its pathway is phospholipid metabolism; phosphatidylethanolamine biosynthesis; phosphatidylethanolamine from CDP-diacylglycerol: step 2/2. Its function is as follows. Catalyzes the formation of phosphatidylethanolamine (PtdEtn) from phosphatidylserine (PtdSer). Plays a central role in phospholipid metabolism and in the interorganelle trafficking of phosphatidylserine. Important for virulence. This is Phosphatidylserine decarboxylase proenzyme 1, mitochondrial from Candida albicans (strain SC5314 / ATCC MYA-2876) (Yeast).